Reading from the N-terminus, the 208-residue chain is Thioredoxin domain-containing protein 9 (208 aa).

The Thioredoxin domain occupies 68-179 (YEEVADEKEF…MENRLARSEV (112 aa)).

Expressed throughout the body with high expression in the nervous system, including the ventral nerve cord and tail neurons, and vulva.

Its subcellular location is the nucleus. The protein resides in the cytoplasm. Required for normal microtubule organization and function. Regulates tubulin acetylation in ALM and PLM neurons. In Caenorhabditis elegans, this protein is Thioredoxin domain-containing protein 9.